The chain runs to 599 residues: Putative fused cobalt transport protein CbiMQ (599 aa).

The cbiM stretch occupies residues 1 to 239 (MHIMEGFLPS…LLPSSDQNLS (239 aa)). The next 16 helical transmembrane spans lie at 12 to 32 (WWQFWALLAVVCVLAGMAALI), 44 to 64 (LLGLAGACVFILSSLKLPSVG), 74 to 94 (FGAILFGPAVCSVFCTIVLVF), 106 to 126 (TLGANIISMGVAGPLAACIIF), 140 to 160 (SFSVTVFCAAAAADLVTYMMT), 162 to 182 (LQLALAYPAAEGGVLASFVVY), 183 to 203 (LGIFSITQVPLAVLEGILIVL), 247 to 267 (IIAGIIVVLLTASLAFLLAGL), 303 to 323 (WLFALQAGIGAAVLVFCLYLL), 356 to 376 (QVSAWLKLLFCLSAIIIGVTS), 377 to 397 (PLPYLPLFIAGVMIFAALIIA), 407 to 427 (LLTIPLVFAGTGAAVILLITG), 438 to 458 (IGAFHFQITTTSLELAALVLS), 463 to 483 (GMCSLYFLTLTTPITSLFSVL), 493 to 513 (IDLSMLIYRYIFVFIGEAIAI), and 579 to 599 (MAVFLFIALIFGLLCAEMLLL). Residues 341–599 (DEHILDDVAI…GLLCAEMLLL (259 aa)) are cbiQ.

This sequence in the N-terminal section; belongs to the CbiM family. The protein in the C-terminal section; belongs to the CbiQ family. Forms an energy-coupling factor (ECF) transporter complex composed of an ATP-binding protein (A component, CbiO), a transmembrane protein (T component, CbiQ) and 2 possible substrate-capture proteins (S components, CbiM and CbiN) of unknown stoichimetry.

It is found in the cell membrane. Its pathway is cofactor biosynthesis; adenosylcobalamin biosynthesis. Functionally, part of the energy-coupling factor (ECF) transporter complex CbiMNOQ involved in cobalt import. The chain is Putative fused cobalt transport protein CbiMQ (cbiMQ) from Methanocorpusculum labreanum (strain ATCC 43576 / DSM 4855 / Z).